The chain runs to 448 residues: Iroquois-class homeodomain protein irx-3 (448 aa).

The segment at residues 108 to 170 (DPSRPKNATR…NARRRLKKEN (63 aa)) is a DNA-binding region (homeobox; TALE-type). The disordered stretch occupies residues 171 to 247 (KMTWAPRSRT…EVSDGFEDLN (77 aa)). A compositionally biased stretch (acidic residues) spans 195 to 222 (KHEDEEEIDLENIDTEDIESKEDLDDPD). Positions 223 to 237 (TDIHSDSKTDTRSDS) are enriched in basic and acidic residues. The span at 238-247 (EVSDGFEDLN) shows a compositional bias: acidic residues.

The protein belongs to the TALE/IRO homeobox family. As to expression, primarily expressed in the developing central nervous system (CNS). At gastrula stage, expressed in both the superficial and deep layers of the presumptive neural plate with expression spreading to the prospective hindbrain, spinal cord and midbrain-hindbrain junction as neurulation proceeds. Not expressed in the anterior neural plate and CNS expression in the tadpole excludes the forebrain. Outside of the CNS, expressed around the closing blastopore at early gastrula stages and as gastrulation proceeds, expression switches to the anterior lateral plate mesoderm. In tadpoles, expressed in the ectodermal layer of the branchial arches, and in the otic vesicle. Also expressed in specific and overlapping dynamic patterns with irx1 and irx2 during pronephric kidney development. Renal expression begins before segment-specific terminal differentiation in the pronephric anlage at mid-neurula stage, and is later found in proximal tubule PT3 as well as intermediate tubule segments IT1 and IT2, with expression in the kidney being maintained through to the tadpole stage.

It localises to the nucleus. In terms of biological role, acts partially redundantly with other irx members in neural patterning. Required for formation of the posterior forebrain, midbrain, hindbrain, and to a lesser extent, spinal cord. Both up-regulates and down-regulates gene expression during neural development. Acts early in neural plate development to induce proneural gene expression and specify a neural precursor state. Also up-regulates repressors that prevent neuronal differentiation. Required during at least two stages of pronephros kidney development; during neurula stages, maintains transcription of key renal genes to define the size and identity of the pronephric anlage, probably in part through regulation of bmp-signaling. Subsequently required for proper formation of the intermediate tubule segment of the pronephros. The chain is Iroquois-class homeodomain protein irx-3 (irx3) from Xenopus laevis (African clawed frog).